A 305-amino-acid chain; its full sequence is Probable GTP 3',8-cyclase (305 aa).

The Radical SAM core domain maps to 6–228 (NHRRPLVSLR…MTRKFMQDRK (223 aa)). Arg15 lines the GTP pocket. [4Fe-4S] cluster is bound by residues Cys22 and Cys26. Tyr28 contributes to the S-adenosyl-L-methionine binding site. Cys29 contacts [4Fe-4S] cluster. Arg62 is a binding site for GTP. Gly66 contributes to the S-adenosyl-L-methionine binding site. Thr92 serves as a coordination point for GTP. Residue Ser116 coordinates S-adenosyl-L-methionine. A GTP-binding site is contributed by Lys153. 2 residues coordinate [4Fe-4S] cluster: Cys249 and Cys252. A GTP-binding site is contributed by 254 to 256 (RLR). A [4Fe-4S] cluster-binding site is contributed by Cys266.

The protein belongs to the radical SAM superfamily. MoaA family. It depends on [4Fe-4S] cluster as a cofactor.

The catalysed reaction is GTP + AH2 + S-adenosyl-L-methionine = (8S)-3',8-cyclo-7,8-dihydroguanosine 5'-triphosphate + 5'-deoxyadenosine + L-methionine + A + H(+). It participates in cofactor biosynthesis; molybdopterin biosynthesis. Its function is as follows. Catalyzes the cyclization of GTP to (8S)-3',8-cyclo-7,8-dihydroguanosine 5'-triphosphate. The chain is Probable GTP 3',8-cyclase from Methanothermobacter marburgensis (strain ATCC BAA-927 / DSM 2133 / JCM 14651 / NBRC 100331 / OCM 82 / Marburg) (Methanobacterium thermoautotrophicum).